A 326-amino-acid chain; its full sequence is Putative GTPase CC_2483 (326 aa).

GTP contacts are provided by residues 61–69 (GVPGAGKST), D203, and 238–240 (SGL).

Belongs to the SIMIBI class G3E GTPase family. ArgK/MeaB subfamily.

Its function is as follows. May have GTPase activity. May also bind and hydrolyze ATP. May function as chaperone. The chain is Putative GTPase CC_2483 from Caulobacter vibrioides (strain ATCC 19089 / CIP 103742 / CB 15) (Caulobacter crescentus).